A 295-amino-acid polypeptide reads, in one-letter code: uncharacterized protein (295 aa).

2 disordered regions span residues 33 to 52 (VDAP…DSHS) and 180 to 295 (LSKA…AELK). At S50 the chain carries Phosphoserine. Polar residues-rich tracts occupy residues 205–217 (QKNS…SKLI) and 241–251 (TSRASVLSQSP). Residues 267 to 276 (EASEGPEDTP) show a composition bias toward acidic residues. Residues 277–289 (ESSQSPEESVSAS) are compositionally biased toward low complexity.

This is an uncharacterized protein from Homo sapiens (Human).